The primary structure comprises 437 residues: Vacuolar protein sorting-associated protein 4A (437 aa).

Positions 1–84 (MTTSTLQKAI…RSKEKHGKKP (84 aa)) are interaction with CHMP1B. The MIT domain occupies 2–80 (TTSTLQKAID…KDYLRSKEKH (79 aa)). At Lys-8 the chain carries N6-acetyllysine. The segment at 75-106 (RSKEKHGKKPVKENQSEGKGSDSDSEGDNPEK) is disordered. Residues 84-96 (PVKENQSEGKGSD) are compositionally biased toward basic and acidic residues. A phosphoserine mark is found at Ser-95 and Ser-97. 167–174 (GPPGTGKS) contacts ATP.

The protein belongs to the AAA ATPase family. Proposed to be monomeric or homodimeric in nucleotide-free form and to oligomerize upon binding to ATP to form two stacked hexameric or heptameric rings with a central pore through which ESCRT-III substrates are translocated in an ATP-dependent manner. Interacts with CHMP1A, CHMP1B, CHMP2A, CHMP2B, CHMP3, CHMP4A, CHMP4B, CHMP4C and CHMP6. Interacts with VPS4B; the interaction suggests a heteromeric assembly with VPS4B. Interacts with SPAST. Interacts with IST1. Interacts with ZFYVE19/ANCHR; leading to retain it at midbody. Ubiquitously expressed.

Its subcellular location is the late endosome membrane. The protein resides in the midbody. The protein localises to the cytoplasm. It localises to the cytoskeleton. It is found in the spindle. The catalysed reaction is ATP + H2O = ADP + phosphate + H(+). Its function is as follows. Involved in late steps of the endosomal multivesicular bodies (MVB) pathway. Recognizes membrane-associated ESCRT-III assemblies and catalyzes their disassembly, possibly in combination with membrane fission. Redistributes the ESCRT-III components to the cytoplasm for further rounds of MVB sorting. MVBs contain intraluminal vesicles (ILVs) that are generated by invagination and scission from the limiting membrane of the endosome and mostly are delivered to lysosomes enabling degradation of membrane proteins, such as stimulated growth factor receptors, lysosomal enzymes and lipids. It is required for proper accomplishment of various processes including the regulation of endosome size, primary cilium organization, mitotic spindle organization, chromosome segregation, and nuclear envelope sealing and spindle disassembly during anaphase. Involved in cytokinesis: retained at the midbody by ZFYVE19/ANCHR and CHMP4C until abscission checkpoint signaling is terminated at late cytokinesis. It is then released following dephosphorylation of CHMP4C, leading to abscission. VPS4A/B are required for the exosomal release of SDCBP, CD63 and syndecan. Critical for normal erythroblast cytokinesis and correct erythropoiesis. Functionally, (Microbial infection) In conjunction with the ESCRT machinery also appears to function in topologically equivalent membrane fission events, such as the terminal stages of cytokinesis and enveloped virus budding (HIV-1 and other lentiviruses). The polypeptide is Vacuolar protein sorting-associated protein 4A (Homo sapiens (Human)).